Reading from the N-terminus, the 153-residue chain is MGVLDHVSEMFDCSHGHKIKKRKQLQTVEIKVKMDCEGCERKVRRSVEGMKGVSSVTLEPKAHKVTVVGYVDPNKVVARMSHRTGKKVELWPYVPYDVVAHPYAAGVYDKKAPSGYVRRVDDPGVSQLARASSTEVRYTTAFSDENPAACVVM.

The HMA domain occupies 25 to 89 (LQTVEIKVKM…MSHRTGKKVE (65 aa)). A metal cation is bound by residues Cys36 and Cys39. A Cysteine methyl ester modification is found at Cys150. The S-farnesyl cysteine moiety is linked to residue Cys150. Residues 151 to 153 (VVM) constitute a propeptide, removed in mature form.

The protein belongs to the HIPP family. In terms of assembly, interacts with ZHD11/HB29 and ACBP2 (via ankyrin repeats). May also interact with HB21. In terms of tissue distribution, expressed in roots, stems and flowers. Lower expression in siliques and leaves. Expressed in the vascular tissues. Detected in lateral roots, shoot apical meristem, petals of unopened flowers and weak expression in leaf vasculature.

Its subcellular location is the nucleus membrane. It localises to the cell membrane. In terms of biological role, heavy-metal-binding protein. Binds lead, cadmium and copper. May be involved in heavy-metal transport. May be involved in cadmium transport and play a role in cadmium detoxification. The sequence is that of Heavy metal-associated isoprenylated plant protein 26 from Arabidopsis thaliana (Mouse-ear cress).